Here is a 1059-residue protein sequence, read N- to C-terminus: Probable sucrose-phosphate synthase (1059 aa).

4 disordered regions span residues 95-145, 671-695, 710-731, and 748-769; these read AVQR…VKSR, RHPQ…GDSL, DGER…NATD, and SKDT…ASKF. Over residues 102–114 the composition is skewed to basic and acidic residues; sequence RRLERERGRREAT. A compositionally biased stretch (acidic residues) spans 681-691; sequence GGESSESEESP.

It belongs to the glycosyltransferase 1 family. In terms of assembly, homodimer or homotetramer.

The catalysed reaction is beta-D-fructose 6-phosphate + UDP-alpha-D-glucose = sucrose 6(F)-phosphate + UDP + H(+). It participates in glycan biosynthesis; sucrose biosynthesis; sucrose from D-fructose 6-phosphate and UDP-alpha-D-glucose: step 1/2. Activity is regulated by phosphorylation and moderated by concentration of metabolites and light. Plays a role in photosynthetic sucrose synthesis by catalyzing the rate-limiting step of sucrose biosynthesis from UDP-glucose and fructose- 6-phosphate. Involved in the regulation of carbon partitioning in the leaves of plants. May regulate the synthesis of sucrose and therefore play a major role as a limiting factor in the export of photoassimilates out of the leaf. Plays a role for sucrose availability that is essential for plant growth and fiber elongation. This is Probable sucrose-phosphate synthase (SPS) from Vicia faba (Broad bean).